Here is a 132-residue protein sequence, read N- to C-terminus: Small ribosomal subunit protein uS11 (132 aa).

This sequence belongs to the universal ribosomal protein uS11 family. In terms of assembly, part of the 30S ribosomal subunit. Interacts with proteins S7 and S18. Binds to IF-3.

Its function is as follows. Located on the platform of the 30S subunit, it bridges several disparate RNA helices of the 16S rRNA. Forms part of the Shine-Dalgarno cleft in the 70S ribosome. The chain is Small ribosomal subunit protein uS11 from Cyanothece sp. (strain PCC 7425 / ATCC 29141).